The primary structure comprises 280 residues: Shikimate dehydrogenase (NADP(+)) (280 aa).

Residues 15 to 17 (SLS) and threonine 62 contribute to the shikimate site. Lysine 66 (proton acceptor) is an active-site residue. Shikimate contacts are provided by asparagine 88 and aspartate 104. NADP(+) contacts are provided by residues 128–132 (GAGGA), 151–156 (NRTEGR), and isoleucine 222. Tyrosine 224 provides a ligand contact to shikimate. Glycine 245 is an NADP(+) binding site.

It belongs to the shikimate dehydrogenase family. In terms of assembly, homodimer.

The catalysed reaction is shikimate + NADP(+) = 3-dehydroshikimate + NADPH + H(+). The protein operates within metabolic intermediate biosynthesis; chorismate biosynthesis; chorismate from D-erythrose 4-phosphate and phosphoenolpyruvate: step 4/7. Its function is as follows. Involved in the biosynthesis of the chorismate, which leads to the biosynthesis of aromatic amino acids. Catalyzes the reversible NADPH linked reduction of 3-dehydroshikimate (DHSA) to yield shikimate (SA). This is Shikimate dehydrogenase (NADP(+)) from Methanosarcina barkeri (strain Fusaro / DSM 804).